The primary structure comprises 247 residues: 3,4-dihydroxy-2-butanone 4-phosphate synthase (247 aa).

Residues 38-39 (RE), aspartate 43, 179-183 (RMGQT), and glutamate 203 each bind D-ribulose 5-phosphate. Glutamate 39 contributes to the Mg(2+) binding site.

This sequence belongs to the DHBP synthase family. Homodimer. Requires Mg(2+) as cofactor. The cofactor is Mn(2+).

The catalysed reaction is D-ribulose 5-phosphate = (2S)-2-hydroxy-3-oxobutyl phosphate + formate + H(+). It participates in cofactor biosynthesis; riboflavin biosynthesis; 2-hydroxy-3-oxobutyl phosphate from D-ribulose 5-phosphate: step 1/1. Catalyzes the conversion of D-ribulose 5-phosphate to formate and 3,4-dihydroxy-2-butanone 4-phosphate. The sequence is that of 3,4-dihydroxy-2-butanone 4-phosphate synthase from Methanosarcina mazei (strain ATCC BAA-159 / DSM 3647 / Goe1 / Go1 / JCM 11833 / OCM 88) (Methanosarcina frisia).